Consider the following 380-residue polypeptide: Peroxisomal membrane protein PEX13 (380 aa).

A disordered region spans residues 1–30; it reads MSDSSAPDLPSKPSSLNAGQSSSLQTTNTG. Residues 1–230 are Lumenal-facing; the sequence is MSDSSAPDLP…NKNTNKLSLK (230 aa). A compositionally biased stretch (polar residues) spans 12-30; sequence KPSSLNAGQSSSLQTTNTG. A helical transmembrane segment spans residues 231–251; it reads PLLLFLAAVVGFPYLLKKLIA. Topologically, residues 252–380 are cytoplasmic; the sequence is HLAETSQMNG…DSTEFQKMKT (129 aa). Positions 277–344 constitute an SH3 domain; that stretch reads TKLEFARALY…PYNYVEIIER (68 aa).

It belongs to the peroxin-13 family. In terms of assembly, interacts (via SH3 domain) with PEX14 (via SH3-binding motif); forming the PEX13-PEX14 docking complex.

The protein resides in the peroxisome membrane. In terms of biological role, component of the PEX13-PEX14 docking complex, a translocon channel that specifically mediates the import of peroxisomal cargo proteins bound to PEX5 receptor. The PEX13-PEX14 docking complex forms a large import pore which can be opened to a diameter of about 9 nm. Mechanistically, PEX5 receptor along with cargo proteins associates with the PEX14 subunit of the PEX13-PEX14 docking complex in the cytosol, leading to the insertion of the receptor into the organelle membrane with the concomitant translocation of the cargo into the peroxisome matrix. This Komagataella pastoris (Yeast) protein is Peroxisomal membrane protein PEX13 (PEX13).